We begin with the raw amino-acid sequence, 116 residues long: Omega-ctenitoxin-Pn3a (116 aa).

Residues 1 to 19 (MKMKLLGIILLVSFPFVLG) form the signal peptide. Residues 20 to 38 (FAGIPIEEGENSVEVGEVE) constitute a propeptide that is removed on maturation. 7 disulfides stabilise this stretch: Cys41-Cys58, Cys48-Cys64, Cys55-Cys90, Cys57-Cys78, Cys66-Cys76, Cys96-Cys102, and Cys106-Cys111. Position 115 is a histidine amide (His115).

The protein belongs to the neurotoxin 04 (omega-agtx) family. 03 (type II/III omega-agtx) subfamily. As to expression, expressed by the venom gland.

It localises to the secreted. Functionally, this toxin is a potent and practically irreversible antagonist of both Cav2.1/CACNA1A and Cav2.2/CACNA1B calcium channels, while it displays a partial and rapidly reversible block of Cav2.3/CACNA1E calcium channels and no effect on Cav3/CACNA1 calcium channels. Inhibits glutamate uptake from rat brain synaptosomes by an interaction between cysteines from both glutamate transporter and toxin. Blocks potassium-induced exocytosis of synaptic vesicles in brain cortical synaptosomes (IC(50)=1.1 nM). In rat brain, inhibits glutamate release, neuronal death and loss of neurotransmission in the hippocampus resulting from ischemia. In vivo, induces rapid general flaccid paralysis followed by death in 10-30 minutes at dose levels of 5 ug per mouse. The chain is Omega-ctenitoxin-Pn3a from Phoneutria nigriventer (Brazilian armed spider).